A 185-amino-acid chain; its full sequence is MIGLFKVKEKQREESQSNNGRGASTVKKQSAGELRLHKDISELNLPKSCKISFPNGKNDLMNFEVTIKPDEGYYLSGNFVFSFQVSNMYPHEAPKVKCKTKVYHPNIDLEGNVCLNILREDWKPVLNINTVIYGLFHLFTEPNYEDPLNHEAAAVLRDNPKTFEYNVRRAMMGGQVGQTSFPRCM.

The segment at 8-29 (KEKQREESQSNNGRGASTVKKQ) is disordered. Positions 16 to 28 (QSNNGRGASTVKK) are enriched in polar residues. Positions 31–176 (AGELRLHKDI…VRRAMMGGQV (146 aa)) constitute a UBC core domain. Cys-114 functions as the Glycyl thioester intermediate in the catalytic mechanism.

Belongs to the ubiquitin-conjugating enzyme family. UBC12 subfamily.

It functions in the pathway protein modification; protein neddylation. Functionally, accepts the ubiquitin-like protein NEDD8/RUB1 from the ECR1-AXR1 E1 complex and catalyzes its covalent attachment to other proteins. The chain is Probable NEDD8-conjugating enzyme Ubc12-like (RCE2) from Arabidopsis thaliana (Mouse-ear cress).